The chain runs to 89 residues: Large ribosomal subunit protein bL27 (89 aa).

Residues 1-22 form a disordered region; sequence MAHKKAGGSSRNGRDSESKRLG.

Belongs to the bacterial ribosomal protein bL27 family.

The polypeptide is Large ribosomal subunit protein bL27 (Brucella abortus (strain S19)).